The primary structure comprises 457 residues: Adenylosuccinate synthetase isozyme 1 (457 aa).

The tract at residues 1-25 is disordered; it reads MSGTRASNDRPPSAGGVKRGRLQHE. GTP contacts are provided by residues 42–48 and 70–72; these read GDEGKGK and GHT. Residue D43 is the Proton acceptor of the active site. Residues D43 and G70 each contribute to the Mg(2+) site. D43 lines the substrate pocket. IMP-binding positions include 43-46, 68-71, T163, R177, N256, T271, and R335; these read DEGK and NAGH. The Proton donor role is filled by H71. 331–337 serves as a coordination point for substrate; that stretch reads VTTGRKR. GTP-binding positions include R337, 363–365, and 445–448; these read KLD and GVGK.

The protein belongs to the adenylosuccinate synthetase family. As to quaternary structure, homodimer. It depends on Mg(2+) as a cofactor.

The protein resides in the cytoplasm. The catalysed reaction is IMP + L-aspartate + GTP = N(6)-(1,2-dicarboxyethyl)-AMP + GDP + phosphate + 2 H(+). It functions in the pathway purine metabolism; AMP biosynthesis via de novo pathway; AMP from IMP: step 1/2. Functionally, component of the purine nucleotide cycle (PNC), which interconverts IMP and AMP to regulate the nucleotide levels in various tissues, and which contributes to glycolysis and ammoniagenesis. Catalyzes the first committed step in the biosynthesis of AMP from IMP. This chain is Adenylosuccinate synthetase isozyme 1, found in Bos taurus (Bovine).